The following is a 469-amino-acid chain: Neuraminidase (469 aa).

Residues 1–9 (MNPNQKIIT) are Intravirion-facing. The chain crosses the membrane as a helical span at residues 10-30 (IGSVSLTIATICFLMQIAILV). An involved in apical transport and lipid raft association region spans residues 11–33 (GSVSLTIATICFLMQIAILVTTV). Residues 31 to 469 (TTVTLHFKQY…DGADINLMPI (439 aa)) lie on the Virion surface side of the membrane. Residues 36-88 (HFKQYECDSPANNQVMPCEPIIIERNITEIVYLTNTTIEKEICPKLVEYRNWS) are hypervariable stalk region. N-linked (GlcNAc...) asparagine; by host glycosylation is found at Asn-61, Asn-70, and Asn-86. The interval 91-469 (QCKITGFAPF…DGADINLMPI (379 aa)) is head of neuraminidase. Disulfide bonds link Cys-92/Cys-417, Cys-124/Cys-129, Cys-183/Cys-230, Cys-232/Cys-237, Cys-278/Cys-291, Cys-280/Cys-289, Cys-318/Cys-337, and Cys-421/Cys-447. A substrate-binding site is contributed by Arg-118. N-linked (GlcNAc...) asparagine; by host glycosylation is present at Asn-146. Asp-151 (proton donor/acceptor) is an active-site residue. Arg-152 serves as a coordination point for substrate. Asn-200 and Asn-234 each carry an N-linked (GlcNAc...) asparagine; by host glycan. A substrate-binding site is contributed by 276–277 (EE). Arg-292 contributes to the substrate binding site. The Ca(2+) site is built by Asp-293, Gly-297, and Asp-324. Arg-371 contacts substrate. An N-linked (GlcNAc...) asparagine; by host glycan is attached at Asn-402. Tyr-406 functions as the Nucleophile in the catalytic mechanism.

It belongs to the glycosyl hydrolase 34 family. As to quaternary structure, homotetramer. Ca(2+) is required as a cofactor. In terms of processing, N-glycosylated.

It localises to the virion membrane. It is found in the host apical cell membrane. The enzyme catalyses Hydrolysis of alpha-(2-&gt;3)-, alpha-(2-&gt;6)-, alpha-(2-&gt;8)- glycosidic linkages of terminal sialic acid residues in oligosaccharides, glycoproteins, glycolipids, colominic acid and synthetic substrates.. Inhibited by the neuraminidase inhibitors zanamivir (Relenza) and oseltamivir (Tamiflu). These drugs interfere with the release of progeny virus from infected cells and are effective against all influenza strains. Resistance to neuraminidase inhibitors is quite rare. Its function is as follows. Catalyzes the removal of terminal sialic acid residues from viral and cellular glycoconjugates. Cleaves off the terminal sialic acids on the glycosylated HA during virus budding to facilitate virus release. Additionally helps virus spread through the circulation by further removing sialic acids from the cell surface. These cleavages prevent self-aggregation and ensure the efficient spread of the progeny virus from cell to cell. Otherwise, infection would be limited to one round of replication. Described as a receptor-destroying enzyme because it cleaves a terminal sialic acid from the cellular receptors. May facilitate viral invasion of the upper airways by cleaving the sialic acid moieties on the mucin of the airway epithelial cells. Likely to plays a role in the budding process through its association with lipid rafts during intracellular transport. May additionally display a raft-association independent effect on budding. Plays a role in the determination of host range restriction on replication and virulence. Sialidase activity in late endosome/lysosome traffic seems to enhance virus replication. This chain is Neuraminidase, found in Influenza A virus (strain A/Memphis/2/1978 H3N2).